The chain runs to 287 residues: uncharacterized protein (287 aa).

This is an uncharacterized protein from Methanocaldococcus jannaschii (strain ATCC 43067 / DSM 2661 / JAL-1 / JCM 10045 / NBRC 100440) (Methanococcus jannaschii).